Reading from the N-terminus, the 498-residue chain is ATP synthase subunit beta, chloroplastic (498 aa).

172–179 (GGAGVGKT) contacts ATP.

It belongs to the ATPase alpha/beta chains family. As to quaternary structure, F-type ATPases have 2 components, CF(1) - the catalytic core - and CF(0) - the membrane proton channel. CF(1) has five subunits: alpha(3), beta(3), gamma(1), delta(1), epsilon(1). CF(0) has four main subunits: a(1), b(1), b'(1) and c(9-12).

The protein localises to the plastid. It localises to the chloroplast thylakoid membrane. The catalysed reaction is ATP + H2O + 4 H(+)(in) = ADP + phosphate + 5 H(+)(out). Its function is as follows. Produces ATP from ADP in the presence of a proton gradient across the membrane. The catalytic sites are hosted primarily by the beta subunits. The protein is ATP synthase subunit beta, chloroplastic of Licuala grandis (Ruffled fan palm).